We begin with the raw amino-acid sequence, 216 residues long: Pyrophosphatase PpaX (216 aa).

Asp-9 acts as the Nucleophile in catalysis.

It belongs to the HAD-like hydrolase superfamily. PpaX family. Mg(2+) is required as a cofactor.

The enzyme catalyses diphosphate + H2O = 2 phosphate + H(+). In terms of biological role, hydrolyzes pyrophosphate formed during P-Ser-HPr dephosphorylation by HPrK/P. Might play a role in controlling the intracellular pyrophosphate pool. This chain is Pyrophosphatase PpaX, found in Bacillus anthracis (strain A0248).